The sequence spans 113 residues: Cytochrome c oxidase subunit 7A2-like, mitochondrial (113 aa).

A mitochondrion-targeting transit peptide spans 1-54; that stretch reads MYYKFSSFTQKLAGAWASEAYTPQGLKPVSTEAPPIIFATPTKLTSSVTAYDYS. K68 carries the N6-acetyllysine modification. The helical transmembrane segment at 81 to 106 threads the bilayer; the sequence is PDQMLYRTTMALTLGGTIYCLIALYM.

The protein belongs to the cytochrome c oxidase VIIa family. In terms of assembly, interacts with the mitochondrial respiratory complexes III (CIII) and IV (CIV), promoting their association.

The protein resides in the mitochondrion inner membrane. It functions in the pathway energy metabolism; oxidative phosphorylation. In terms of biological role, assembly factor that mediates the formation of some mitochondrial respiratory supercomplexes (respirasomes), thereby promoting oxidative phosphorylation and energy metabolism. Acts as a molecular adapter that associates with both mitochondrial respiratory complexes III (CIII) and IV (CIV), promoting their association. Mediates the formation of various mitochondrial respiratory supercomplexes, such as MCIII(2)IV(2), composed of two CIII and two CIV, and the CS-respirasome (MCI(1)III(2)IV(2)), composed of one CI, two CIII and two CIV. Not involved in the formation of the canonical respirasome (MCI(1)III(2)IV(1)), composed of one CI, two CIII and one CIV. The formation of different respirasomes is important for cell adaptation to oxygen conditions and prevent metabolic exhaustion: supercomplexes mediated by COX7A2L/SCAF1 are required to maintain oxidative phosphorylation upon low oxygen conditions and promote metabolic rewiring toward glycolysis. This Mus musculus (Mouse) protein is Cytochrome c oxidase subunit 7A2-like, mitochondrial.